We begin with the raw amino-acid sequence, 379 residues long: Cytochrome b (379 aa).

The next 4 helical transmembrane spans lie at 33 to 53 (FGSL…FLAM), 77 to 98 (WMIR…FIHI), 113 to 133 (WNIG…GYVL), and 178 to 198 (FFAF…VHLL). Positions 83 and 97 each coordinate heme b. Positions 182 and 196 each coordinate heme b. A ubiquinone is bound at residue His-201. A run of 4 helical transmembrane segments spans residues 226–246 (MKDI…VLFY), 288–308 (LGGV…PMMH), 320–340 (LSQC…WIGG), and 347–367 (FIMI…IIMP).

It belongs to the cytochrome b family. The cytochrome bc1 complex contains 11 subunits: 3 respiratory subunits (MT-CYB, CYC1 and UQCRFS1), 2 core proteins (UQCRC1 and UQCRC2) and 6 low-molecular weight proteins (UQCRH/QCR6, UQCRB/QCR7, UQCRQ/QCR8, UQCR10/QCR9, UQCR11/QCR10 and a cleavage product of UQCRFS1). This cytochrome bc1 complex then forms a dimer. Requires heme b as cofactor.

It localises to the mitochondrion inner membrane. In terms of biological role, component of the ubiquinol-cytochrome c reductase complex (complex III or cytochrome b-c1 complex) that is part of the mitochondrial respiratory chain. The b-c1 complex mediates electron transfer from ubiquinol to cytochrome c. Contributes to the generation of a proton gradient across the mitochondrial membrane that is then used for ATP synthesis. This Massoutiera mzabi (Mzab gundi) protein is Cytochrome b (MT-CYB).